The chain runs to 137 residues: Ribosome-binding factor A (137 aa).

The protein belongs to the RbfA family. As to quaternary structure, monomer. Binds 30S ribosomal subunits, but not 50S ribosomal subunits or 70S ribosomes.

The protein resides in the cytoplasm. Functionally, one of several proteins that assist in the late maturation steps of the functional core of the 30S ribosomal subunit. Associates with free 30S ribosomal subunits (but not with 30S subunits that are part of 70S ribosomes or polysomes). Required for efficient processing of 16S rRNA. May interact with the 5'-terminal helix region of 16S rRNA. The protein is Ribosome-binding factor A of Rhodopseudomonas palustris (strain TIE-1).